The sequence spans 567 residues: Urease subunit alpha (567 aa).

A Urease domain is found at 129-567 (GGIDVHVHFI…VPMSQRYFLF (439 aa)). Ni(2+) is bound by residues His134, His136, and Lys217. An N6-carboxylysine modification is found at Lys217. Residue His219 coordinates substrate. Residues His246 and His272 each contribute to the Ni(2+) site. The active-site Proton donor is His320. Asp360 is a binding site for Ni(2+).

Belongs to the metallo-dependent hydrolases superfamily. Urease alpha subunit family. In terms of assembly, heterotrimer of UreA (gamma), UreB (beta) and UreC (alpha) subunits. Three heterotrimers associate to form the active enzyme. Ni cation is required as a cofactor. Post-translationally, carboxylation allows a single lysine to coordinate two nickel ions.

The protein resides in the cytoplasm. It carries out the reaction urea + 2 H2O + H(+) = hydrogencarbonate + 2 NH4(+). Its pathway is nitrogen metabolism; urea degradation; CO(2) and NH(3) from urea (urease route): step 1/1. This Blochmanniella floridana protein is Urease subunit alpha.